Here is a 121-residue protein sequence, read N- to C-terminus: Basic phospholipase A2 CoaTx-II (121 aa).

Cystine bridges form between cysteine 26/cysteine 115, cysteine 28/cysteine 44, cysteine 43/cysteine 95, cysteine 49/cysteine 121, cysteine 50/cysteine 88, cysteine 57/cysteine 81, and cysteine 75/cysteine 86. Residues 105–117 (KKYRIYPKFLCKK) are important for membrane-damaging activities in eukaryotes and bacteria; heparin-binding.

Belongs to the phospholipase A2 family. Group II subfamily. K49 sub-subfamily. As to quaternary structure, homodimer; non-covalently-linked. As to expression, expressed by the venom gland.

Its subcellular location is the secreted. Its function is as follows. Snake venom phospholipase A2 (PLA2) that lacks enzymatic inactivity. It shows antibacterial activity against both Gram-negative and Gram-positive bacteria, including methicillin-resistant strains. In vivo, it causes local muscular damage, but no systemic damage (intravenous administration does not elevate plasma creatine kinase). Also causes an inflammatory activity that is demonstrated by mice paw edema induction and pro-inflammatory cytokine IL-6 elevation. A model of myotoxic mechanism has been proposed: an apo Lys49-PLA2 is activated by the entrance of a hydrophobic molecule (e.g. fatty acid) at the hydrophobic channel of the protein leading to a reorientation of a monomer. This reorientation causes a transition between 'inactive' to 'active' states, causing alignment of C-terminal and membrane-docking sites (MDoS) side-by-side and putting the membrane-disruption sites (MDiS) in the same plane, exposed to solvent and in a symmetric position for both monomers. The MDoS region stabilizes the toxin on membrane by the interaction of charged residues with phospholipid head groups. Subsequently, the MDiS region destabilizes the membrane with penetration of hydrophobic residues. This insertion causes a disorganization of the membrane, allowing an uncontrolled influx of ions (i.e. calcium and sodium), and eventually triggering irreversible intracellular alterations and cell death. The sequence is that of Basic phospholipase A2 CoaTx-II from Crotalus lutosus abyssus (Grand Canyon rattlesnake).